Consider the following 2176-residue polypeptide: Protein eyes shut (2176 aa).

Over 1–122 (MSNVHQFDTQ…NPNILLPTLR (122 aa)) the chain is Cytoplasmic. Residues 123-143 (ILARGLLLPALILAILVGSSQ) form a helical membrane-spanning segment. An EGF-like 1 domain is found at 144–180 (AGFACLSNPCVFGVCIDGLNSSYSCYCIDGYTGIQCQ). The Extracellular portion of the chain corresponds to 144–2176 (AGFACLSNPC…DLHGDEPLTV (2033 aa)). Disulfide bonds link Cys148–Cys158, Cys153–Cys168, Cys170–Cys179, Cys186–Cys197, Cys191–Cys206, Cys208–Cys217, Cys224–Cys235, Cys229–Cys244, Cys246–Cys255, Cys262–Cys276, Cys270–Cys286, Cys288–Cys297, Cys304–Cys315, Cys309–Cys324, Cys326–Cys335, Cys342–Cys353, Cys347–Cys362, Cys364–Cys373, Cys380–Cys392, Cys386–Cys401, and Cys403–Cys412. Asn163 carries an N-linked (GlcNAc...) asparagine glycan. The EGF-like 2; calcium-binding domain maps to 182–218 (NWDECWSSPCQNGGTCVDGVAYYNCTCPEGFSGSNCE). Residue Asn205 is glycosylated (N-linked (GlcNAc...) asparagine). Residues 220-256 (NVDECMSNPCQNGGLCRDRTNGYICTCQPGYLGSHCE) form the EGF-like 3; calcium-binding domain. Residues 258–298 (DVAVCETGTGARCQHGGECIEGPGLEFTCDCPAGWHGRICQ) form the EGF-like 4 domain. In terms of domain architecture, EGF-like 5; calcium-binding spans 300–336 (EINECASSPCQNGGVCVDKLAAYACACPMGYTGINCE). The region spanning 338–374 (EILICADNPCQNNALCLMEEGVPTCYCVPDYHGEKCE) is the EGF-like 6 domain. Positions 376-413 (QYDECQLGPRCMNGGVCIDGVDTFSCSCPPLLTGMLCE) constitute an EGF-like 7; calcium-binding domain. The N-linked (GlcNAc...) asparagine glycan is linked to Asn425. 2 stretches are compositionally biased toward low complexity: residues 429–447 (PATQ…MAPP) and 482–502 (VTSV…VSVE). 5 disordered regions span residues 429-465 (PATQ…SRAS), 482-639 (VTSV…RPTA), 757-783 (RFTT…LPTP), 802-854 (LITT…VEIT), and 902-1014 (APPA…GVPE). Residues 514–526 (GSHSISVEQTTAV) are compositionally biased toward polar residues. Acidic residues predominate over residues 548–560 (SASESETETEEEI). Composition is skewed to low complexity over residues 564 to 582 (TTAR…ESPS) and 596 to 632 (TSAS…SEEV). The segment covering 757-775 (RFTTVQPPAGVTTTSPTED) has biased composition (polar residues). Basic residues predominate over residues 811 to 820 (THHHHHHHPH). 2 stretches are compositionally biased toward pro residues: residues 904–922 (PATP…PSPP) and 930–955 (TLPP…PTPP). The EGF-like 8 domain occupies 1018–1054 (GDVDCIKLGCYNGGTCVTTSEGSRCVCRFDRQGPLCE). Cystine bridges form between Cys1022–Cys1033, Cys1027–Cys1042, and Cys1044–Cys1053. Residues 1059–1266 (IRNAAFSGDS…GITECGSLAC (208 aa)) enclose the Laminin G-like 1 domain. N-linked (GlcNAc...) asparagine glycans are attached at residues Asn1165, Asn1170, and Asn1176. An EGF-like 9 domain is found at 1309–1346 (EISVCEDNPCQYGGTCVQFPGSGYLCLCPLGKHGHYCE). 3 disulfides stabilise this stretch: Cys1313–Cys1324, Cys1318–Cys1334, and Cys1336–Cys1345. In terms of domain architecture, Laminin G-like 2 spans 1353–1549 (LPSFSGSVNG…GVGQCGTREC (197 aa)). Residue Asn1471 is glycosylated (N-linked (GlcNAc...) asparagine). EGF-like domains follow at residues 1545-1581 (GTRE…PLCA) and 1583-1621 (PTNP…KNCE). Cystine bridges form between Cys1549/Cys1560, Cys1554/Cys1569, Cys1571/Cys1580, Cys1587/Cys1600, Cys1594/Cys1609, and Cys1611/Cys1620. 2 N-linked (GlcNAc...) asparagine glycosylation sites follow: Asn1665 and Asn1861. Positions 1692–1879 (EKQRSFSPVP…NIRDCDGTAC (188 aa)) constitute a Laminin G-like 3 domain. EGF-like domains follow at residues 1875–1912 (DGTA…DRCE) and 1913–1946 (YSET…FYCE). Intrachain disulfides connect Cys1879-Cys1890, Cys1884-Cys1900, Cys1902-Cys1911, Cys1917-Cys1928, Cys1922-Cys1934, and Cys1936-Cys1945. In terms of domain architecture, Laminin G-like 4 spans 1952–2166 (PTTPSFRGNS…TYQGENIGSC (215 aa)). Asn1994, Asn2035, and Asn2099 each carry an N-linked (GlcNAc...) asparagine glycan. A disordered region spans residues 2080-2101 (GGRSLGSTTPRSTLAGRRKNSS).

It belongs to the EYS family. As to expression, expressed from the beginning of rhabdomere biogenesis (48 hours after pupal formation), when it decorates the entire photoreceptor apical surface.

The protein localises to the membrane. It is found in the secreted. Functionally, essential for the formation of matrix-filled interrhabdomeral space: critical for the formation of epithelial lumina in the retina. Acts together with prominin (prom) and the cell adhesion molecule chaoptin (chp) to choreograph the partitioning of rhabdomeres into an open system. This Drosophila melanogaster (Fruit fly) protein is Protein eyes shut.